We begin with the raw amino-acid sequence, 60 residues long: Defensin MGD-1 (60 aa).

Intrachain disulfides connect Cys4–Cys25, Cys10–Cys33, Cys14–Cys35, and Cys21–Cys38. Trp28 is subject to 3-hydroxytryptophan. Cys38 carries the cysteine amide modification. Positions 39–60 are excised as a propeptide; sequence GGRREDVEDIFDIFDNEAADRF.

Belongs to the invertebrate defensin family. Type 2 subfamily. The hydroxylation of the Trp-28 is not important for the antibacterial activity. Abundantly expressed in hemocytes.

The protein resides in the secreted. Its function is as follows. Active against both Gram-positive and Gram-negative bacteria but is not cytotoxic towards human erythrocytes or protozoa. This is Defensin MGD-1 (FH3) from Mytilus galloprovincialis (Mediterranean mussel).